The sequence spans 250 residues: Testis-expressed protein 101 (250 aa).

An N-terminal signal peptide occupies residues 1–25; sequence MGACRIQYILLVFLLIASHWTLVQN. N-linked (GlcNAc...) asparagine glycans are attached at residues asparagine 45, asparagine 110, asparagine 134, and asparagine 160. The UPAR/Ly6 domain occupies 141–215; that stretch reads CPTCLALEPC…VKETCSYQSF (75 aa). Glycine 224 is lipidated: GPI-anchor amidated glycine. Residues 225-250 constitute a propeptide, removed in mature form; it reads ASWMPTSLWVLELLLPALSLPLIYFP.

In terms of assembly, interacts with VAMP3. Interacts with LY6K. Interacts with DPEP3; co-localized on the cell surface of spermatocytes, spermatids, and testicular spermatozoa, co-localized only in cytoplasmic droplets of caput and corpus epididymal sperm. Interacts with ADAM5. N-glycosylated; by high mannose and/or biantennary complex and/or certain types of hybrid oligosaccharides; possesses different oligosaccharides chains according to its subcellular localization in the testis. Post-translationally, sheds from membrane raft by ACE and released from the cell surface of epididymal sperm while it passes through the caput epididymis leading to disappearance of TEX101 on spermatozoa; is essential to produce fertile spermatozoa. Detected in testis.

The protein localises to the cell membrane. It is found in the membrane raft. The protein resides in the cytoplasmic vesicle. Its subcellular location is the secretory vesicle. It localises to the acrosome. The protein localises to the secreted. Functionally, plays a role in fertilization by controlling binding of sperm to zona pellucida and migration of spermatozoa into the oviduct. May play a role in signal transduction and promote protein tyrosine phosphorylation. The chain is Testis-expressed protein 101 from Rattus norvegicus (Rat).